The sequence spans 478 residues: 3-isopropylmalate dehydratase large subunit (478 aa).

Residues Cys357, Cys418, and Cys421 each coordinate [4Fe-4S] cluster.

Belongs to the aconitase/IPM isomerase family. LeuC type 1 subfamily. In terms of assembly, heterodimer of LeuC and LeuD. It depends on [4Fe-4S] cluster as a cofactor.

It catalyses the reaction (2R,3S)-3-isopropylmalate = (2S)-2-isopropylmalate. It functions in the pathway amino-acid biosynthesis; L-leucine biosynthesis; L-leucine from 3-methyl-2-oxobutanoate: step 2/4. Catalyzes the isomerization between 2-isopropylmalate and 3-isopropylmalate, via the formation of 2-isopropylmaleate. The protein is 3-isopropylmalate dehydratase large subunit of Novosphingobium aromaticivorans (strain ATCC 700278 / DSM 12444 / CCUG 56034 / CIP 105152 / NBRC 16084 / F199).